A 253-amino-acid polypeptide reads, in one-letter code: Diphthine synthase (253 aa).

Residues Asp-83, Leu-86, 111–112, Leu-163, and Leu-205 each bind S-adenosyl-L-methionine; that span reads SI.

It belongs to the diphthine synthase family. As to quaternary structure, homodimer.

The enzyme catalyses 2-[(3S)-amino-3-carboxypropyl]-L-histidyl-[translation elongation factor 2] + 3 S-adenosyl-L-methionine = diphthine-[translation elongation factor 2] + 3 S-adenosyl-L-homocysteine + 3 H(+). It functions in the pathway protein modification; peptidyl-diphthamide biosynthesis. S-adenosyl-L-methionine-dependent methyltransferase that catalyzes the trimethylation of the amino group of the modified target histidine residue in translation elongation factor 2 (EF-2), to form an intermediate called diphthine. The three successive methylation reactions represent the second step of diphthamide biosynthesis. This Pyrobaculum neutrophilum (strain DSM 2338 / JCM 9278 / NBRC 100436 / V24Sta) (Thermoproteus neutrophilus) protein is Diphthine synthase.